Reading from the N-terminus, the 400-residue chain is GDNF family receptor alpha-3 (400 aa).

A signal peptide spans 1-31 (MVRPLNPRPLPPVVLMLLLLLPPSPLPLAAG). Cys51 and Cys57 are joined by a disulfide. Residues Asn95 and Asn148 are each glycosylated (N-linked (GlcNAc...) asparagine). 10 cysteine pairs are disulfide-bonded: Cys162–Cys218, Cys169–Cys175, Cys186–Cys196, Cys191–Cys239, Cys220–Cys227, Cys248–Cys316, Cys255–Cys261, Cys272–Cys288, Cys281–Cys340, and Cys318–Cys328. Asn309 is a glycosylation site (N-linked (GlcNAc...) asparagine). Residue Asn374 is the site of GPI-anchor amidated asparagine attachment. The propeptide at 375–400 (PAVRPQPWVPSLFSCTLPLILLLSLW) is removed in mature form.

It belongs to the GDNFR family. Interacts with ARTN ligand and RET: forms a 2:2:2 ternary complex composed of ARTN ligand, GFRA3 and RET receptor. Interacts with SORL1. In terms of processing, N-glycosylated. As to expression, widely expressed in adult and fetus which exhibit a similar pattern. Essentially not expressed in the central nervous system, but highly expressed in several sensory and sympathetic ganglia of the peripheral nervous system. Moderate expression in many non-neuronal tissues, particularly those of the digestive and urogenital systems, but high expression in stomach and appendix. Several types of glandular tissues show low expression. Very low or no expression detected in the hematopoietic system.

Its subcellular location is the cell membrane. In terms of biological role, receptor for artemin (ARTN), a growth factor that supports the survival of sensory and sympathetic peripheral neurons. ARTN-binding leads to autophosphorylation and activation of the RET receptor. This chain is GDNF family receptor alpha-3 (GFRA3), found in Homo sapiens (Human).